The chain runs to 187 residues: Large ribosomal subunit protein uL5 (187 aa).

This sequence belongs to the universal ribosomal protein uL5 family. In terms of assembly, part of the 50S ribosomal subunit; part of the 5S rRNA/L5/L18/L25 subcomplex. Contacts the 5S rRNA and the P site tRNA. Forms a bridge to the 30S subunit in the 70S ribosome.

Its function is as follows. This is one of the proteins that bind and probably mediate the attachment of the 5S RNA into the large ribosomal subunit, where it forms part of the central protuberance. In the 70S ribosome it contacts protein S13 of the 30S subunit (bridge B1b), connecting the 2 subunits; this bridge is implicated in subunit movement. Contacts the P site tRNA; the 5S rRNA and some of its associated proteins might help stabilize positioning of ribosome-bound tRNAs. The polypeptide is Large ribosomal subunit protein uL5 (Malacoplasma penetrans (strain HF-2) (Mycoplasma penetrans)).